Consider the following 338-residue polypeptide: UDP-glucose 4-epimerase (338 aa).

NAD(+) is bound by residues 11–12, 31–36, 58–59, 80–84, asparagine 99, serine 124, tyrosine 149, lysine 153, and phenylalanine 178; these read YI, DNLCNS, DI, and FAGLK. Substrate contacts are provided by serine 124 and tyrosine 149. The active-site Proton acceptor is the tyrosine 149. Substrate contacts are provided by residues asparagine 179, 199–200, 216–218, arginine 231, 292–295, and tyrosine 299; these read NL, AIF, and REGD.

Belongs to the NAD(P)-dependent epimerase/dehydratase family. As to quaternary structure, homodimer. NAD(+) serves as cofactor.

It catalyses the reaction UDP-alpha-D-glucose = UDP-alpha-D-galactose. It functions in the pathway carbohydrate metabolism; galactose metabolism. Involved in the metabolism of galactose. Catalyzes the conversion of UDP-galactose (UDP-Gal) to UDP-glucose (UDP-Glc) through a mechanism involving the transient reduction of NAD. The polypeptide is UDP-glucose 4-epimerase (galE) (Yersinia pestis).